The sequence spans 337 residues: ATP-dependent 6-phosphofructokinase (337 aa).

ATP is bound at residue glycine 11. 21–25 (RAVVR) serves as a coordination point for ADP. Residues 72-73 (RY) and 102-105 (GDGS) each bind ATP. Residue aspartate 103 participates in Mg(2+) binding. Substrate is bound at residue 125 to 127 (TID). Catalysis depends on aspartate 127, which acts as the Proton acceptor. Arginine 154 provides a ligand contact to ADP. Residues arginine 162 and 169–171 (MGR) contribute to the substrate site. ADP-binding positions include 185 to 187 (GAD) and 214 to 216 (KNH). Substrate-binding positions include glutamate 223, arginine 245, and 251–254 (HILR).

Belongs to the phosphofructokinase type A (PFKA) family. ATP-dependent PFK group I subfamily. Prokaryotic clade 'B1' sub-subfamily. In terms of assembly, homotetramer. Mg(2+) is required as a cofactor.

Its subcellular location is the cytoplasm. The catalysed reaction is beta-D-fructose 6-phosphate + ATP = beta-D-fructose 1,6-bisphosphate + ADP + H(+). It functions in the pathway carbohydrate degradation; glycolysis; D-glyceraldehyde 3-phosphate and glycerone phosphate from D-glucose: step 3/4. Its activity is regulated as follows. Allosterically activated by ADP and other diphosphonucleosides, and allosterically inhibited by phosphoenolpyruvate. In terms of biological role, catalyzes the phosphorylation of D-fructose 6-phosphate to fructose 1,6-bisphosphate by ATP, the first committing step of glycolysis. The protein is ATP-dependent 6-phosphofructokinase of Streptococcus mutans serotype c (strain ATCC 700610 / UA159).